The following is a 55-amino-acid chain: Large ribosomal subunit protein bL33 (55 aa).

This sequence belongs to the bacterial ribosomal protein bL33 family.

The polypeptide is Large ribosomal subunit protein bL33 (Caulobacter sp. (strain K31)).